The sequence spans 494 residues: Protein nucleotidyltransferase YdiU (494 aa).

Positions 99, 101, 102, 118, 130, 131, 181, and 188 each coordinate ATP. The Proton acceptor role is filled by Asp-261. The Mg(2+) site is built by Asn-262 and Asp-271. Asp-271 contacts ATP.

The protein belongs to the SELO family. The cofactor is Mg(2+). It depends on Mn(2+) as a cofactor.

It catalyses the reaction L-seryl-[protein] + ATP = 3-O-(5'-adenylyl)-L-seryl-[protein] + diphosphate. The catalysed reaction is L-threonyl-[protein] + ATP = 3-O-(5'-adenylyl)-L-threonyl-[protein] + diphosphate. The enzyme catalyses L-tyrosyl-[protein] + ATP = O-(5'-adenylyl)-L-tyrosyl-[protein] + diphosphate. It carries out the reaction L-histidyl-[protein] + UTP = N(tele)-(5'-uridylyl)-L-histidyl-[protein] + diphosphate. It catalyses the reaction L-seryl-[protein] + UTP = O-(5'-uridylyl)-L-seryl-[protein] + diphosphate. The catalysed reaction is L-tyrosyl-[protein] + UTP = O-(5'-uridylyl)-L-tyrosyl-[protein] + diphosphate. Functionally, nucleotidyltransferase involved in the post-translational modification of proteins. It can catalyze the addition of adenosine monophosphate (AMP) or uridine monophosphate (UMP) to a protein, resulting in modifications known as AMPylation and UMPylation. The polypeptide is Protein nucleotidyltransferase YdiU (Variovorax paradoxus (strain S110)).